The following is a 473-amino-acid chain: Cysteine--tRNA ligase (473 aa).

Position 30 (Cys-30) interacts with Zn(2+). Residues 32–42 (MTVYDYCHIGH) carry the 'HIGH' region motif. Residues Cys-213, His-238, and Glu-242 each contribute to the Zn(2+) site. Positions 270–274 (KMSKS) match the 'KMSKS' region motif. Lys-273 serves as a coordination point for ATP.

It belongs to the class-I aminoacyl-tRNA synthetase family. As to quaternary structure, monomer. It depends on Zn(2+) as a cofactor.

The protein resides in the cytoplasm. The catalysed reaction is tRNA(Cys) + L-cysteine + ATP = L-cysteinyl-tRNA(Cys) + AMP + diphosphate. This Acinetobacter baumannii (strain SDF) protein is Cysteine--tRNA ligase.